The chain runs to 146 residues: Cyanate hydratase (146 aa).

Residues Arg-87, Glu-90, and Ser-113 contribute to the active site.

This sequence belongs to the cyanase family.

It carries out the reaction cyanate + hydrogencarbonate + 3 H(+) = NH4(+) + 2 CO2. Catalyzes the reaction of cyanate with bicarbonate to produce ammonia and carbon dioxide. This Marinomonas sp. (strain MWYL1) protein is Cyanate hydratase.